The chain runs to 519 residues: 2-isopropylmalate synthase (519 aa).

A Pyruvate carboxyltransferase domain is found at 5–267 (VIIFDTTLRD…QTRINHKEIY (263 aa)). Residues D14, H202, H204, and N238 each contribute to the Mn(2+) site. A regulatory domain region spans residues 392–519 (VMNYFNTQSG…RKHHTTQEAV (128 aa)).

This sequence belongs to the alpha-IPM synthase/homocitrate synthase family. LeuA type 1 subfamily. Homodimer. The cofactor is Mn(2+).

The protein resides in the cytoplasm. It catalyses the reaction 3-methyl-2-oxobutanoate + acetyl-CoA + H2O = (2S)-2-isopropylmalate + CoA + H(+). Its pathway is amino-acid biosynthesis; L-leucine biosynthesis; L-leucine from 3-methyl-2-oxobutanoate: step 1/4. In terms of biological role, catalyzes the condensation of the acetyl group of acetyl-CoA with 3-methyl-2-oxobutanoate (2-ketoisovalerate) to form 3-carboxy-3-hydroxy-4-methylpentanoate (2-isopropylmalate). The polypeptide is 2-isopropylmalate synthase (Proteus mirabilis (strain HI4320)).